The primary structure comprises 145 residues: D-aminoacyl-tRNA deacylase (145 aa).

The Gly-cisPro motif, important for rejection of L-amino acids motif lies at 137-138; the sequence is GP.

The protein belongs to the DTD family. In terms of assembly, homodimer.

Its subcellular location is the cytoplasm. The enzyme catalyses glycyl-tRNA(Ala) + H2O = tRNA(Ala) + glycine + H(+). It carries out the reaction a D-aminoacyl-tRNA + H2O = a tRNA + a D-alpha-amino acid + H(+). An aminoacyl-tRNA editing enzyme that deacylates mischarged D-aminoacyl-tRNAs. Also deacylates mischarged glycyl-tRNA(Ala), protecting cells against glycine mischarging by AlaRS. Acts via tRNA-based rather than protein-based catalysis; rejects L-amino acids rather than detecting D-amino acids in the active site. By recycling D-aminoacyl-tRNA to D-amino acids and free tRNA molecules, this enzyme counteracts the toxicity associated with the formation of D-aminoacyl-tRNA entities in vivo and helps enforce protein L-homochirality. The sequence is that of D-aminoacyl-tRNA deacylase from Proteus mirabilis (strain HI4320).